We begin with the raw amino-acid sequence, 98 residues long: NADH-ubiquinone oxidoreductase chain 4L (98 aa).

3 helical membrane-spanning segments follow: residues 1-21 (MSLVHMNILLAFTMSLTGLLM), 29-49 (ALLCLEGMMLSLFILMTITIL), and 59-79 (TPIILLVFAACEAAVGLALLV).

It belongs to the complex I subunit 4L family. As to quaternary structure, core subunit of respiratory chain NADH dehydrogenase (Complex I) which is composed of 45 different subunits.

Its subcellular location is the mitochondrion inner membrane. It carries out the reaction a ubiquinone + NADH + 5 H(+)(in) = a ubiquinol + NAD(+) + 4 H(+)(out). Core subunit of the mitochondrial membrane respiratory chain NADH dehydrogenase (Complex I) which catalyzes electron transfer from NADH through the respiratory chain, using ubiquinone as an electron acceptor. Part of the enzyme membrane arm which is embedded in the lipid bilayer and involved in proton translocation. The protein is NADH-ubiquinone oxidoreductase chain 4L (MT-ND4L) of Lipotes vexillifer (Yangtze river dolphin).